We begin with the raw amino-acid sequence, 365 residues long: MTNQAEEKRILIMAGGTGGHVFPALAVAKYLSQQGWKVRWLGTAERMEARLVPQHGFDIDFIDIKGVRGNGLMRKLAAPFKIIRSVMQARAVIKKFKPHVVMGMGGFASGPGGVAAKLSGIPLVLHEQNAIPGMTNRLLSRIASEVLCAFDGTFTDIKAETVGNPIRKELIALGEKRKPVCDDDSLKVLVVGGSLGAKIFNDVMPSVLEGVSKTHSMTVWHQVGRDNLATVKAEYQRLGQDGSVSVAEFIDDMEAAYRWADVVVCRSGALTVSELAAVGLPSLLVPYPHAVDDHQTKNAKVLVNAGAAFLLPQPIVDTSKLMTKLSMLASDKQELCNMGQRARDVAILDATQRVANVCIRLAEKG.

Residues 17–19 (TGG), asparagine 129, arginine 167, serine 194, isoleucine 250, 269–274 (ALTVSE), and glutamine 295 each bind UDP-N-acetyl-alpha-D-glucosamine.

The protein belongs to the glycosyltransferase 28 family. MurG subfamily.

Its subcellular location is the cell inner membrane. It carries out the reaction di-trans,octa-cis-undecaprenyl diphospho-N-acetyl-alpha-D-muramoyl-L-alanyl-D-glutamyl-meso-2,6-diaminopimeloyl-D-alanyl-D-alanine + UDP-N-acetyl-alpha-D-glucosamine = di-trans,octa-cis-undecaprenyl diphospho-[N-acetyl-alpha-D-glucosaminyl-(1-&gt;4)]-N-acetyl-alpha-D-muramoyl-L-alanyl-D-glutamyl-meso-2,6-diaminopimeloyl-D-alanyl-D-alanine + UDP + H(+). It participates in cell wall biogenesis; peptidoglycan biosynthesis. Its function is as follows. Cell wall formation. Catalyzes the transfer of a GlcNAc subunit on undecaprenyl-pyrophosphoryl-MurNAc-pentapeptide (lipid intermediate I) to form undecaprenyl-pyrophosphoryl-MurNAc-(pentapeptide)GlcNAc (lipid intermediate II). This chain is UDP-N-acetylglucosamine--N-acetylmuramyl-(pentapeptide) pyrophosphoryl-undecaprenol N-acetylglucosamine transferase, found in Shewanella halifaxensis (strain HAW-EB4).